A 189-amino-acid polypeptide reads, in one-letter code: UPF0301 protein PSEEN5058 (189 aa).

The protein belongs to the UPF0301 (AlgH) family.

The polypeptide is UPF0301 protein PSEEN5058 (Pseudomonas entomophila (strain L48)).